The primary structure comprises 394 residues: Phosphopentomutase (394 aa).

Aspartate 14, aspartate 287, histidine 292, aspartate 328, histidine 329, and histidine 340 together coordinate Mn(2+).

It belongs to the phosphopentomutase family. It depends on Mn(2+) as a cofactor.

Its subcellular location is the cytoplasm. The enzyme catalyses 2-deoxy-alpha-D-ribose 1-phosphate = 2-deoxy-D-ribose 5-phosphate. It carries out the reaction alpha-D-ribose 1-phosphate = D-ribose 5-phosphate. It functions in the pathway carbohydrate degradation; 2-deoxy-D-ribose 1-phosphate degradation; D-glyceraldehyde 3-phosphate and acetaldehyde from 2-deoxy-alpha-D-ribose 1-phosphate: step 1/2. Its function is as follows. Isomerase that catalyzes the conversion of deoxy-ribose 1-phosphate (dRib-1-P) and ribose 1-phosphate (Rib-1-P) to deoxy-ribose 5-phosphate (dRib-5-P) and ribose 5-phosphate (Rib-5-P), respectively. This Listeria innocua serovar 6a (strain ATCC BAA-680 / CLIP 11262) protein is Phosphopentomutase.